We begin with the raw amino-acid sequence, 842 residues long: Elongation factor 2 (842 aa).

The 330-residue stretch at 17–346 (ANVRNMSVIA…MIVLHLPSPV (330 aa)) folds into the tr-type G domain. Residues 26-33 (AHVDHGKS), 158-161 (NKVD), and 213-215 (SGL) contribute to the GTP site. The residue at position 699 (His699) is a Diphthamide.

This sequence belongs to the TRAFAC class translation factor GTPase superfamily. Classic translation factor GTPase family. EF-G/EF-2 subfamily.

Its subcellular location is the cytoplasm. It carries out the reaction GTP + H2O = GDP + phosphate + H(+). It participates in protein biosynthesis; polypeptide chain elongation. Its function is as follows. Catalyzes the GTP-dependent ribosomal translocation step during translation elongation. During this step, the ribosome changes from the pre-translocational (PRE) to the post-translocational (POST) state as the newly formed A-site-bound peptidyl-tRNA and P-site-bound deacylated tRNA move to the P and E sites, respectively. Catalyzes the coordinated movement of the two tRNA molecules, the mRNA and conformational changes in the ribosome. This is Elongation factor 2 (EFT2) from Meyerozyma guilliermondii (strain ATCC 6260 / CBS 566 / DSM 6381 / JCM 1539 / NBRC 10279 / NRRL Y-324) (Yeast).